The primary structure comprises 505 residues: ATP synthase subunit alpha (505 aa).

170–177 (GDRQTGKS) is an ATP binding site.

It belongs to the ATPase alpha/beta chains family. As to quaternary structure, F-type ATPases have 2 components, CF(1) - the catalytic core - and CF(0) - the membrane proton channel. CF(1) has five subunits: alpha(3), beta(3), gamma(1), delta(1), epsilon(1). CF(0) has four main subunits: a(1), b(1), b'(1) and c(9-12).

It is found in the cellular thylakoid membrane. The catalysed reaction is ATP + H2O + 4 H(+)(in) = ADP + phosphate + 5 H(+)(out). Produces ATP from ADP in the presence of a proton gradient across the membrane. The alpha chain is a regulatory subunit. This is ATP synthase subunit alpha from Prochlorococcus marinus (strain MIT 9215).